A 450-amino-acid chain; its full sequence is Serine--tRNA ligase, cytoplasmic (450 aa).

Residue 238-240 (TSE) participates in L-serine binding. Residues 271-273 (RRE) and Val-287 contribute to the ATP site. Glu-294 lines the L-serine pocket. 358 to 361 (ELVS) is an ATP binding site. Thr-396 is a binding site for L-serine.

It belongs to the class-II aminoacyl-tRNA synthetase family. Type-1 seryl-tRNA synthetase subfamily. In terms of assembly, homodimer. The tRNA molecule binds across the dimer.

The protein resides in the cytoplasm. It is found in the cytosol. The enzyme catalyses tRNA(Ser) + L-serine + ATP = L-seryl-tRNA(Ser) + AMP + diphosphate + H(+). Its function is as follows. Catalyzes the attachment of serine to tRNA(Ser) in a two-step reaction: serine is first activated by ATP to form Ser-AMP and then transferred to the acceptor end of tRNA(Ser). This chain is Serine--tRNA ligase, cytoplasmic, found in Schizosaccharomyces pombe (strain 972 / ATCC 24843) (Fission yeast).